The sequence spans 297 residues: Farnesyl diphosphate synthase (297 aa).

Isopentenyl diphosphate-binding residues include K47, R50, and H79. Mg(2+) is bound by residues D86 and D92. (2E)-geranyl diphosphate is bound at residue R97. Residue R98 participates in isopentenyl diphosphate binding. 4 residues coordinate (2E)-geranyl diphosphate: K183, T184, Q221, and K238.

The protein belongs to the FPP/GGPP synthase family. Requires Mg(2+) as cofactor.

It is found in the cytoplasm. The catalysed reaction is isopentenyl diphosphate + (2E)-geranyl diphosphate = (2E,6E)-farnesyl diphosphate + diphosphate. The polypeptide is Farnesyl diphosphate synthase (Geobacillus stearothermophilus (Bacillus stearothermophilus)).